A 158-amino-acid polypeptide reads, in one-letter code: Transcription elongation factor GreA (158 aa).

Belongs to the GreA/GreB family.

Necessary for efficient RNA polymerase transcription elongation past template-encoded arresting sites. The arresting sites in DNA have the property of trapping a certain fraction of elongating RNA polymerases that pass through, resulting in locked ternary complexes. Cleavage of the nascent transcript by cleavage factors such as GreA or GreB allows the resumption of elongation from the new 3'terminus. GreA releases sequences of 2 to 3 nucleotides. This is Transcription elongation factor GreA from Allorhizobium ampelinum (strain ATCC BAA-846 / DSM 112012 / S4) (Agrobacterium vitis (strain S4)).